The primary structure comprises 681 residues: MVKVQKPQPKSLNKSASIEGVVKKKGKPEKTKKLATDATLELASNKKAKNAAPVKKDAIKKEPEVSKKGAEKKQSKAAKRPLILAPPESPAAPAPAAKKSKAKPAASGAPVGKKIEAKKPLILAPPESPVPPKKQEKKTKAAPVKAKKEPAPAKKSVQDPVPSIKKVPAAKKSGQTAALTKKTAKTEKQAAPAKPAKAQPASQLQKKAKAVQKLSKPASPPKSKKALSKSKPGQAKGNAVNKEPAKSKKPVELTFELKAFDEKRFHEIVNENNVTKVCAALKSVVSEEVEKKKNTSIFSDYRYVLQVCSYKIPSCPKRMVKLNLKHSLVGKDDDVALIVPDLQRGAKFDYDPTKQHYEDMLREAGVKQRLTVVPFNQLRNEMGSFEAKRKFLNSYDYLLCDGRLSGQATAFLGKNTQKPRNVLHSLRLSKDNDKLPQEVTRALTRTAFRQLSKGDLIAVPVGNHEITAEQLAENILLVIKQLQEVYPGGLANIRSMYLKIDITGTSALPLYVSMCAPPEDVPYVVGPREQRMLKLKKQANEVLSKFAMTKDAEFIKLTSDQVKRKAQLRKEKAALLAADAAPKDNDGGDAAVPAKKARKESSSEGAKADAESDEEEEVEEAEDSAGESGDEDEEGHDGDDTDEDEDEDDDDDNEDGDDDEDEDDDEEDDDEEDDDDDDDEE.

Disordered stretches follow at residues 1–248 (MVKV…AKSK) and 579–681 (DAAP…DDEE). 2 positions are modified to phosphoserine: S15 and S17. Basic and acidic residues predominate over residues 54-74 (VKKDAIKKEPEVSKKGAEKKQ). Phosphoserine is present on S89. Low complexity predominate over residues 103–112 (KPAASGAPVG). Phosphoserine is present on S128. Positions 189–217 (QAAPAKPAKAQPASQLQKKAKAVQKLSKP) are enriched in low complexity. Residues 599–610 (KESSSEGAKADA) are compositionally biased toward basic and acidic residues. Residues 611–681 (ESDEEEEVEE…EDDDDDDDEE (71 aa)) are compositionally biased toward acidic residues.

It belongs to the universal ribosomal protein uL1 family. Highly divergent.

In Drosophila melanogaster (Fruit fly), this protein is Ribosomal L1 domain-containing protein CG13096.